The sequence spans 341 residues: Anthranilate phosphoribosyltransferase (341 aa).

5-phospho-alpha-D-ribose 1-diphosphate-binding positions include glycine 79, glycine 82–aspartate 83, threonine 87, asparagine 89–threonine 92, lysine 107–serine 115, and alanine 119. Glycine 79 lines the anthranilate pocket. Serine 91 is a binding site for Mg(2+). Position 110 (asparagine 110) interacts with anthranilate. Arginine 165 provides a ligand contact to anthranilate. Mg(2+) contacts are provided by aspartate 224 and glutamate 225.

Belongs to the anthranilate phosphoribosyltransferase family. As to quaternary structure, homodimer. Requires Mg(2+) as cofactor.

It carries out the reaction N-(5-phospho-beta-D-ribosyl)anthranilate + diphosphate = 5-phospho-alpha-D-ribose 1-diphosphate + anthranilate. Its pathway is amino-acid biosynthesis; L-tryptophan biosynthesis; L-tryptophan from chorismate: step 2/5. Catalyzes the transfer of the phosphoribosyl group of 5-phosphorylribose-1-pyrophosphate (PRPP) to anthranilate to yield N-(5'-phosphoribosyl)-anthranilate (PRA). This chain is Anthranilate phosphoribosyltransferase, found in Lacticaseibacillus paracasei (strain ATCC 334 / BCRC 17002 / CCUG 31169 / CIP 107868 / KCTC 3260 / NRRL B-441) (Lactobacillus paracasei).